The following is a 263-amino-acid chain: Neuferricin (263 aa).

Positions Met-1–Ala-22 are cleaved as a signal peptide. Residues Ile-35–Val-134 enclose the Cytochrome b5 heme-binding domain. Residues Val-220 to Tyr-249 are disordered. A compositionally biased stretch (basic and acidic residues) spans Asp-231–Leu-241.

Belongs to the cytochrome b5 family. MAPR subfamily. Expressed in various tissues including brain, heart, adrenal gland, and kidney. In the brain, mainly expressed in pyramidal cells around the CA3 region of Ammon horn in hippocampus. Present in brain (at protein level).

It is found in the secreted. Functionally, heme-binding protein which promotes neuronal but not astrocyte differentiation. This chain is Neuferricin, found in Mus musculus (Mouse).